A 262-amino-acid polypeptide reads, in one-letter code: Taurine import ATP-binding protein TauB (262 aa).

The ABC transporter domain occupies 4 to 233 (LELERISAQY…RYAAGESARA (230 aa)). 38–45 (GPSGSGKT) is a binding site for ATP.

This sequence belongs to the ABC transporter superfamily. Taurine importer (TC 3.A.1.17.1) family. As to quaternary structure, the complex is composed of two ATP-binding proteins (TauB), two transmembrane proteins (TauC) and a solute-binding protein (TauA).

It localises to the cell inner membrane. The catalysed reaction is taurine(out) + ATP + H2O = taurine(in) + ADP + phosphate + H(+). In terms of biological role, part of the ABC transporter complex TauABC involved in taurine import. Responsible for energy coupling to the transport system. This Pseudomonas putida (Arthrobacter siderocapsulatus) protein is Taurine import ATP-binding protein TauB.